We begin with the raw amino-acid sequence, 110 residues long: Tyrosine-protein phosphatase 3 (110 aa).

Positions 1–110 (QKCATIVMVT…NPPHSGPIVV (110 aa)) constitute a Tyrosine-protein phosphatase domain. Substrate is bound at residue Asp-80.

Belongs to the protein-tyrosine phosphatase family.

It catalyses the reaction O-phospho-L-tyrosyl-[protein] + H2O = L-tyrosyl-[protein] + phosphate. The protein is Tyrosine-protein phosphatase 3 (STY-3) of Styela plicata (Wrinkled sea squirt).